The following is a 457-amino-acid chain: MLDYFFNPRGIAVIGASNDPKKLGYEVFKNLKEYQGGKVYPVNVREEEVQGVKAYKSVKEIPGEVDLAIIVVPKKFVKQTLIECGEKGVKGVVIITAGFGETGEEGKREEKELVEIAHKYGMRIIGPNCVGIMNTHANLNATFITVAKKGNVAFISQSGALGAGIVYKTIKEDIGFSKFISVGNMADLDFADLMEYLADTQEDKAIALYIEGIKDGRRFIEVAKKVTKKKPVIALKAGKSESGSRAAASHTGSLAGSWKIYEAAFKQSGVLVANTIDEMLSMARAFTQPLPKGNRVAIMTNAGGPGVLTADEIDKRGLKLANLEEKTIEELRSFLPPMAAVKNPVDMIASARGEDYYRTAKLLLQDPNVDILIAICVVPTFAGMTPTEHAEGIIRAVKEVNNGKPVLALFMAGYVSEKAKELLEKNGIPTYERPEDVAAAAYALVQQAKNVGGGVNG.

This sequence belongs to the acetate CoA ligase alpha subunit family. In terms of assembly, heterotetramer of two alpha and two beta subunits.

The enzyme catalyses acetate + ATP + CoA = acetyl-CoA + ADP + phosphate. Functionally, catalyzes the reversible formation of acetate and ATP from acetyl-CoA by using ADP and phosphate. Can use other substrates such as phenylacetyl-CoA, indoleacetyl-CoA and isobutyryl-CoA, but not succinyl-CoA. Seems to be involved primarily in the degradation of aryl-CoA esters to the corresponding acids. Participates in the conversion of acetyl-CoA to acetate and in the degradation of branched-chain amino acids via branched-chain-acyl-CoA esters. The polypeptide is Acetate--CoA ligase [ADP-forming] II subunit alpha (Pyrococcus furiosus (strain ATCC 43587 / DSM 3638 / JCM 8422 / Vc1)).